The following is a 359-amino-acid chain: Protein URE2 (359 aa).

The disordered stretch occupies residues 39–82 (FSAGVNNNNNNSSSSNNNNNNNNNAQNNNSGRNGSQSNDNGNNI). Positions 44–81 (NNNNNNSSSSNNNNNNNNNAQNNNSGRNGSQSNDNGNN) are enriched in low complexity. The region spanning 117–201 (EGYTLFSHRS…HLVNKYYKET (85 aa)) is the GST N-terminal domain. The GST C-terminal domain maps to 210–359 (DLADQSQINA…PAVIKALRGE (150 aa)).

It belongs to the GST superfamily. Homodimer.

Plays an important role in the cellular response to the nitrogen source. URE2 gene plays a major part in the repression of GLN1 and GDH2 genes by glutamine, and is required for the inactivation of glutamine synthetase. URE2 gene product may catalytically inactivate GLN3 in response to an increase in the intracellular concentration of glutamine. The chain is Protein URE2 (URE2) from Saccharomyces paradoxus (Yeast).